Here is a 413-residue protein sequence, read N- to C-terminus: MTIAPEPNSFRTGPDERGRFGIFGGRFVAETLMPLILELEAAYETAKKDPAFQAEMESYGTHYIGRPSPLYYAERLTEHLRAKAPAGQGAKVYFKREELNHTGSHKVNNVLGQILLARRMGKPRIIAETGAGQHGVATATLCARFGLKCVVYMGAVDVARQAPNVFRMKMLGAEVVPVESGTKTLKDAMNEALRDWVTNVADTFYCIGTVAGPHPYPAMVRDFQSVIGRETREQMIAQEGRIPDSLVACIGGGSNAMGLFHPFLDDREVEIFGVEAAGHGVQSGLHAASLTGGKPGVLHGNRTYLLMDGDGQIADAHSISAGLDYPGIGPEHAWLHEMGRVTYLSATDSETLEAFKLCSMLEGIIPALEPAHALSKVLELAPQRPAEHLMVMNMSGRGDKDIPQVAEIFGTKI.

Lys106 is modified (N6-(pyridoxal phosphate)lysine).

Belongs to the TrpB family. Tetramer of two alpha and two beta chains. The cofactor is pyridoxal 5'-phosphate.

The catalysed reaction is (1S,2R)-1-C-(indol-3-yl)glycerol 3-phosphate + L-serine = D-glyceraldehyde 3-phosphate + L-tryptophan + H2O. It participates in amino-acid biosynthesis; L-tryptophan biosynthesis; L-tryptophan from chorismate: step 5/5. The beta subunit is responsible for the synthesis of L-tryptophan from indole and L-serine. The sequence is that of Tryptophan synthase beta chain from Methylobacterium radiotolerans (strain ATCC 27329 / DSM 1819 / JCM 2831 / NBRC 15690 / NCIMB 10815 / 0-1).